The following is a 137-amino-acid chain: Large ribosomal subunit protein uL16 (137 aa).

The protein belongs to the universal ribosomal protein uL16 family. In terms of assembly, part of the 50S ribosomal subunit.

Binds 23S rRNA and is also seen to make contacts with the A and possibly P site tRNAs. This is Large ribosomal subunit protein uL16 from Lactococcus lactis subsp. cremoris (strain SK11).